A 154-amino-acid polypeptide reads, in one-letter code: Myoglobin (154 aa).

Residues 2 to 148 (GLSDGEWQLV…FRKDIAAKYK (147 aa)) form the Globin domain. A Phosphoserine modification is found at serine 4. Position 65 (histidine 65) interacts with nitrite. Histidine 65 contacts O2. Residue threonine 68 is modified to Phosphothreonine. Position 94 (histidine 94) interacts with heme b.

This sequence belongs to the globin family. As to quaternary structure, monomeric.

The protein resides in the cytoplasm. The protein localises to the sarcoplasm. It catalyses the reaction Fe(III)-heme b-[protein] + nitric oxide + H2O = Fe(II)-heme b-[protein] + nitrite + 2 H(+). The catalysed reaction is H2O2 + AH2 = A + 2 H2O. Its function is as follows. Monomeric heme protein which primary function is to store oxygen and facilitate its diffusion within muscle tissues. Reversibly binds oxygen through a pentacoordinated heme iron and enables its timely and efficient release as needed during periods of heightened demand. Depending on the oxidative conditions of tissues and cells, and in addition to its ability to bind oxygen, it also has a nitrite reductase activity whereby it regulates the production of bioactive nitric oxide. Under stress conditions, like hypoxia and anoxia, it also protects cells against reactive oxygen species thanks to its pseudoperoxidase activity. The chain is Myoglobin (MB) from Orcinus orca (Killer whale).